We begin with the raw amino-acid sequence, 350 residues long: Delta(6)-protoilludene synthase STEHIDRAFT_64702 (350 aa).

Positions 89, 225, 229, and 233 each coordinate Mg(2+). Residues 89 to 93 (DEHSD) carry the D(D/E)XX(D/E) motif motif. An NSE motif motif is present at residues 225-233 (NDIVSYNIE). 2 residues coordinate (2E,6E)-farnesyl diphosphate: Arg314 and Tyr315.

It belongs to the terpene synthase family. The cofactor is Mg(2+). Requires Mn(2+) as cofactor. Ca(2+) serves as cofactor. Ni(2+) is required as a cofactor. It depends on Co(2+) as a cofactor.

It carries out the reaction (2E,6E)-farnesyl diphosphate = Delta(6)-protoilludene + diphosphate. It catalyses the reaction (2E,6E)-farnesyl diphosphate = alpha-selinene + diphosphate. With respect to regulation, ca(2+) switches the cyclization mechanism of delta(6)-protoilludene synthase from 1,11 to 1,10 cyclization which leads to the production of beta-elemene. Its function is as follows. Terpene cyclase that catalyzes the cyclization of farnesyl diphosphate (FPP) to delta(6)-protoilludene. In presence of Ca(2+), a significant switch from 1,11 to a dual 1,11/1,10 cyclization occurs, producing beta-elemene as the major product, with lower levels of delta(6)-protoilludene and (E)-beta-caryophyllene, and traces of beta-selinene and alpha-selinene. This chain is Delta(6)-protoilludene synthase STEHIDRAFT_64702, found in Stereum hirsutum (strain FP-91666) (White-rot fungus).